The chain runs to 148 residues: Small ribosomal subunit protein eS19 (148 aa).

This sequence belongs to the eukaryotic ribosomal protein eS19 family. In terms of assembly, part of the 30S ribosomal subunit.

In terms of biological role, may be involved in maturation of the 30S ribosomal subunit. This chain is Small ribosomal subunit protein eS19, found in Methanocaldococcus jannaschii (strain ATCC 43067 / DSM 2661 / JAL-1 / JCM 10045 / NBRC 100440) (Methanococcus jannaschii).